The following is a 1438-amino-acid chain: DNA polymerase III PolC-type (1438 aa).

Residues 422–578 form the Exonuclease domain; the sequence is YVVFDVETTG…YDTEATAYIF (157 aa).

The protein belongs to the DNA polymerase type-C family. PolC subfamily.

It localises to the cytoplasm. It carries out the reaction DNA(n) + a 2'-deoxyribonucleoside 5'-triphosphate = DNA(n+1) + diphosphate. In terms of biological role, required for replicative DNA synthesis. This DNA polymerase also exhibits 3' to 5' exonuclease activity. This Staphylococcus aureus (strain bovine RF122 / ET3-1) protein is DNA polymerase III PolC-type.